The following is a 289-amino-acid chain: D-alanine aminotransferase (289 aa).

Tyr-31 contributes to the substrate binding site. Arg-50 contributes to the pyridoxal 5'-phosphate binding site. Substrate is bound by residues Arg-99 and His-101. Lys-147 carries the N6-(pyridoxal phosphate)lysine modification. Glu-179 lines the pyridoxal 5'-phosphate pocket.

This sequence belongs to the class-IV pyridoxal-phosphate-dependent aminotransferase family. Homodimer. The cofactor is pyridoxal 5'-phosphate.

The enzyme catalyses D-alanine + 2-oxoglutarate = D-glutamate + pyruvate. Its function is as follows. Acts on the D-isomers of alanine, leucine, aspartate, glutamate, aminobutyrate, norvaline and asparagine. The enzyme transfers an amino group from a substrate D-amino acid to the pyridoxal phosphate cofactor to form pyridoxamine and an alpha-keto acid in the first half-reaction. The second half-reaction is the reverse of the first, transferring the amino group from the pyridoxamine to a second alpha-keto acid to form the product D-amino acid via a ping-pong mechanism. This is an important process in the formation of D-alanine and D-glutamate, which are essential bacterial cell wall components. This is D-alanine aminotransferase (dat) from Listeria monocytogenes serovar 1/2a (strain ATCC BAA-679 / EGD-e).